We begin with the raw amino-acid sequence, 1191 residues long: Solute carrier family 12 member 2 (1191 aa).

The disordered stretch occupies residues 1-166 (MEPAFPASSA…MSEGSLHSSG (166 aa)). The Cytoplasmic portion of the chain corresponds to 1–258 (MEPAFPASSA…ADNKGVVKFG (258 aa)). 4 stretches are compositionally biased toward low complexity: residues 13–25 (QSQSGPEPGAGQQ), 59–69 (KGQTAAQPAAA), 80–99 (AAAPSPASPAAAAEPPAAAA), and 131–141 (SASSAHGGHQP). The span at 142-155 (PSESMNGYPQNGDT) shows a compositional bias: polar residues. A phosphothreonine; by OXSR1 and STK39 mark is found at Thr175, Thr179, and Thr184. Thr189 and Thr202 each carry phosphothreonine. A discontinuously helical transmembrane segment spans residues 259 to 288 (WIKGVLVRCMLNIWGVMLFIRLSWIVGHAG). Leu269 is a binding site for Na(+). Positions 270 and 271 each coordinate K(+). Trp272 is a binding site for Na(+). 3 residues coordinate chloride: Gly273, Val274, and Met275. A helical transmembrane segment spans residues 289 to 308 (IGLALLVIGTATVVTTITGL). Residues 309-339 (STSAITTNGFVRGGGAYYLISRSLGPEFGGA) are Cytoplasmic-facing. Residues 340-367 (IGLIFAFANAVAVAMYVVGFAETVRDLL) traverse the membrane as a helical segment. Phe344 contacts chloride. Residue Tyr355 participates in K(+) binding. The Extracellular portion of the chain corresponds to 368 to 377 (VEHNALMIDE). Residues 378-401 (MSDIRIIGSVTIVVLFGISVAGME) form a helical membrane-spanning segment. The Cytoplasmic portion of the chain corresponds to 402–404 (WEA). The helical transmembrane segment at 405–426 (KAQIVLLGILLLAIVNFTVGTF) threads the bilayer. Over 427–458 (IPANDKRAKGFFNYRGEIFSENFVPDFRDGED) the chain is Extracellular. Residues 459-476 (FFSVFAIFFPAATGILAG) form a discontinuously helical membrane-spanning segment. K(+) is bound by residues Pro468, Ala469, and Thr471. Chloride contacts are provided by Pro468 and Ala469. The chloride site is built by Gly472 and Ile473. Topologically, residues 477–491 (ANISGDLADPQLAIP) are cytoplasmic. Residues 492 to 513 (KGTLLAILITTIVYAGAAVSVG) form a helical membrane-spanning segment. Residues 514-571 (SCIVREATGNLTDAIIPGTVTNCTNVACKLGFNFSSCATNKCSYGLMNDFQVMSLVSG) lie on the Extracellular side of the membrane. 2 N-linked (GlcNAc...) asparagine glycosylation sites follow: Asn523 and Asn535. Residues Cys536 and Cys541 are joined by a disulfide bond. A glycan (N-linked (GlcNAc...) asparagine) is linked at Asn546. Cys550 and Cys555 form a disulfide bridge. The helical transmembrane segment at 572-596 (FGPLITAGIFSATLSSALASLVSAP) threads the bilayer. Ala583, Ser586, and Ser587 together coordinate Na(+). Residues 597–624 (KIFQALCKDNIYPGLHVFSVGYGKNNEP) lie on the Cytoplasmic side of the membrane. The next 2 membrane-spanning stretches (helical) occupy residues 625–645 (LRGYVLTFFIGLGFILIAELN) and 646–664 (VIAPIISNFFLASYALINF). Chloride is bound by residues Phe655 and Tyr659. Residues 665–687 (SVFHASLAKSPGWRPAFRFYNMW) are Cytoplasmic-facing. Transmembrane regions (helical) follow at residues 688–705 (ISLIGAILCCGVMFVINW) and 706–718 (WAALLTNVIVLAL). Residues 719–1191 (YIYVTYKKPD…NHQSVLTFYS (473 aa)) lie on the Cytoplasmic side of the membrane. The tract at residues 734-751 (STQALTYLNALQHAIRLT) is scissor helix. The segment at 929–972 (HSDADSSKPSSKSVSETNSPAVCQDQKDEEDDGKASTQPLLKKE) is disordered. The span at 935 to 948 (SKPSSKSVSETNSP) shows a compositional bias: low complexity. Thr1114 carries the post-translational modification Phosphothreonine.

The protein belongs to the SLC12A transporter family. In terms of assembly, homodimer. In terms of processing, phosphorylated at Thr-175, Thr-179 and Thr-184 by OXSR1/OSR1 and STK39/SPAK downstream of WNK kinases (WNK1, WNK2, WNK3 or WNK4), promoting its activity. As to expression, strongly expressed in rectal gland, brain, gill and intestine. Also detected at lower levels in heart, kidney, and testis.

It localises to the basolateral cell membrane. It carries out the reaction K(+)(out) + 2 chloride(out) + Na(+)(out) = K(+)(in) + 2 chloride(in) + Na(+)(in). Its activity is regulated as follows. Activated following phosphorylation by OXSR1/OSR1 and STK39/SPAK. Inhibited by bumetanide. Functionally, cation-chloride cotransporter which mediates the electroneutral transport of chloride, potassium and/or sodium ions across the membrane. Plays a vital role in the regulation of ionic balance and cell volume. The chain is Solute carrier family 12 member 2 (SLC12A2) from Squalus acanthias (Spiny dogfish).